The primary structure comprises 200 residues: Charged multivesicular body protein 6 (200 aa).

The N-myristoyl glycine moiety is linked to residue G2. The stretch at 10-94 (RSRVTEQDKA…ERMVQDIEFT (85 aa)) forms a coiled coil. The Type-2 MIT-interacting motif motif lies at 168-179 (LELPDVPSEPLP). Residues 169-200 (ELPDVPSEPLPEEPPEATPVKNRPKPELVAAS) form a disordered region.

This sequence belongs to the SNF7 family. In terms of assembly, probable core component of the endosomal sorting required for transport complex III (ESCRT-III). ESCRT-III components are thought to multimerize to form a flat lattice on the perimeter membrane of the endosome.

Its subcellular location is the endomembrane system. The protein localises to the late endosome membrane. Its function is as follows. Probable core component of the endosomal sorting required for transport complex III (ESCRT-III) which is involved in multivesicular bodies (MVBs) formation and sorting of endosomal cargo proteins into MVBs. MVBs contain intraluminal vesicles (ILVs) that are generated by invagination and scission from the limiting membrane of the endosome and mostly are delivered to lysosomes enabling degradation of membrane proteins, such as stimulated growth factor receptors, lysosomal enzymes and lipids. In the ESCRT-III complex, it probably serves as an acceptor for the ESCRT-II complex on endosomal membranes. This chain is Charged multivesicular body protein 6 (CHMP6), found in Gallus gallus (Chicken).